Consider the following 269-residue polypeptide: Undecaprenyl-diphosphatase (269 aa).

The next 6 helical transmembrane spans lie at 43-63 (KGKVFEIVIQLGAILAVCWEY), 82-102 (FILNLFVAFLPAAIFGLLLHG), 108-128 (LFSSITVACALIVGGFAILLV), 188-208 (ATEFSFFLAIPVMLAATFYDV), 222-242 (MFAVGFITAFLAALVAIKTLI), and 249-269 (DFKGFAYYRIVLGIIVLAYYW).

This sequence belongs to the UppP family.

It localises to the cell inner membrane. It catalyses the reaction di-trans,octa-cis-undecaprenyl diphosphate + H2O = di-trans,octa-cis-undecaprenyl phosphate + phosphate + H(+). Functionally, catalyzes the dephosphorylation of undecaprenyl diphosphate (UPP). Confers resistance to bacitracin. The chain is Undecaprenyl-diphosphatase from Methylobacillus flagellatus (strain ATCC 51484 / DSM 6875 / VKM B-1610 / KT).